Consider the following 358-residue polypeptide: G-protein coupled receptor 62 (358 aa).

Residues 1–17 lie on the Extracellular side of the membrane; sequence MANGSGLSVTELAGSVG. Asn3 is a glycosylation site (N-linked (GlcNAc...) asparagine). Residues 18-38 traverse the membrane as a helical segment; the sequence is FILAVLVEVGAVLGNGTLLVV. Topologically, residues 39–53 are cytoplasmic; sequence VLRTPDLQDAFYLAH. The helical transmembrane segment at 54–74 threads the bilayer; that stretch reads LCVVDLLAAASIMPLGLLAAP. Residues 75-89 are Extracellular-facing; the sequence is PGLGTVPLDPSSCRA. A helical transmembrane segment spans residues 90 to 110; the sequence is ARFLSAALLPACTLGVAALGL. The Cytoplasmic segment spans residues 111 to 128; sequence ARYRLIVHPLRPGARPAP. Residues 129-149 form a helical membrane-spanning segment; it reads ALVLTAVWSAAALLGALSLLG. Residues 150-176 lie on the Extracellular side of the membrane; that stretch reads PPPAPPPAPARCSVLAGGLGPFRPLWA. Residues 177-197 form a helical membrane-spanning segment; it reads MLAFALPALLLLAAYGSIFLV. Residues 198–234 lie on the Cytoplasmic side of the membrane; the sequence is ARRAALRPPRGTRPRSDSLDSRLSFLPPLRPRLLGGK. A helical transmembrane segment spans residues 235-255; the sequence is AALAPALAVGQFAACWLPYGC. The Extracellular portion of the chain corresponds to 256–268; sequence ACLAPAARAAAAE. Residues 269–289 form a helical membrane-spanning segment; that stretch reads ATVTWVAYSAFAAHPFLYGLL. At 290-358 the chain is on the cytoplasmic side; the sequence is QRPVRLALGR…RQTPSVSEAT (69 aa). The tract at residues 334–358 is disordered; sequence VLGPSEAPEQARELARQTPSVSEAT.

It belongs to the G-protein coupled receptor 1 family. In terms of assembly, homodimer. Forms heterodimer with MTNR1B. Interacts with ARRB1 and ARRB2 in a spontaneous and agonist-independent manner; leading to the internalization of GPR62 in the endosomal compartment. As to expression, expressed in the brain and testes. Expressed widely, in the brain, including the cerebral cortex, cerebellum, hippocampus,thalamus and pituitary gland. In the testes, expressed specifically in the germ cells.

The protein localises to the cell membrane. Its subcellular location is the endosome membrane. Orphan G-protein coupled receptor. Constitutively activates the G(q/11)/inositol phosphate and the G(s)-alpha/cAMP signaling pathways. Has spontaneous activity for beta-arrestin recruitment. Shows a reciprocal regulatory interaction with the melatonin receptor MTNR1B most likely through receptor heteromerization. This is G-protein coupled receptor 62 (Gpr62) from Mus musculus (Mouse).